The sequence spans 146 residues: Hemoglobin subunit beta (146 aa).

Residue valine 1 is modified to N-acetylvaline. The region spanning histidine 2–histidine 146 is the Globin domain. Threonine 12 is modified (phosphothreonine). A Phosphoserine modification is found at serine 44. At lysine 59 the chain carries N6-acetyllysine. Histidine 63 provides a ligand contact to heme b. An N6-acetyllysine modification is found at lysine 82. Histidine 92 contributes to the heme b binding site. At cysteine 93 the chain carries S-nitrosocysteine. Lysine 144 carries the post-translational modification N6-acetyllysine.

The protein belongs to the globin family. As to quaternary structure, heterotetramer of two alpha chains and two beta chains. As to expression, red blood cells.

In terms of biological role, involved in oxygen transport from the lung to the various peripheral tissues. This Peromyscus californicus (California mouse) protein is Hemoglobin subunit beta.